Consider the following 102-residue polypeptide: MALNEQDVARIARLARIELTPDQRSRAQDELNGILHLIERLQAADTEGVEPLAHPLSAHQDIALRLRPDAVTETPSEDRRAELLANAPDARDGLFLVPKVIE.

The protein belongs to the GatC family. As to quaternary structure, heterotrimer of A, B and C subunits.

It carries out the reaction L-glutamyl-tRNA(Gln) + L-glutamine + ATP + H2O = L-glutaminyl-tRNA(Gln) + L-glutamate + ADP + phosphate + H(+). The enzyme catalyses L-aspartyl-tRNA(Asn) + L-glutamine + ATP + H2O = L-asparaginyl-tRNA(Asn) + L-glutamate + ADP + phosphate + 2 H(+). In terms of biological role, allows the formation of correctly charged Asn-tRNA(Asn) or Gln-tRNA(Gln) through the transamidation of misacylated Asp-tRNA(Asn) or Glu-tRNA(Gln) in organisms which lack either or both of asparaginyl-tRNA or glutaminyl-tRNA synthetases. The reaction takes place in the presence of glutamine and ATP through an activated phospho-Asp-tRNA(Asn) or phospho-Glu-tRNA(Gln). The sequence is that of Aspartyl/glutamyl-tRNA(Asn/Gln) amidotransferase subunit C from Bordetella petrii (strain ATCC BAA-461 / DSM 12804 / CCUG 43448).